A 120-amino-acid chain; its full sequence is UPF0295 protein Exig_0660 (120 aa).

2 helical membrane-spanning segments follow: residues 16 to 36 (AMFL…LKQF) and 41 to 61 (VILM…YFLI).

Belongs to the UPF0295 family.

It is found in the cell membrane. This chain is UPF0295 protein Exig_0660, found in Exiguobacterium sibiricum (strain DSM 17290 / CCUG 55495 / CIP 109462 / JCM 13490 / 255-15).